A 171-amino-acid chain; its full sequence is 3-hydroxydecanoyl-[acyl-carrier-protein] dehydratase (171 aa).

Residue histidine 70 is part of the active site.

The protein belongs to the thioester dehydratase family. FabA subfamily. As to quaternary structure, homodimer.

The protein resides in the cytoplasm. The enzyme catalyses a (3R)-hydroxyacyl-[ACP] = a (2E)-enoyl-[ACP] + H2O. The catalysed reaction is (3R)-hydroxydecanoyl-[ACP] = (2E)-decenoyl-[ACP] + H2O. It catalyses the reaction (2E)-decenoyl-[ACP] = (3Z)-decenoyl-[ACP]. It functions in the pathway lipid metabolism; fatty acid biosynthesis. Necessary for the introduction of cis unsaturation into fatty acids. Catalyzes the dehydration of (3R)-3-hydroxydecanoyl-ACP to E-(2)-decenoyl-ACP and then its isomerization to Z-(3)-decenoyl-ACP. Can catalyze the dehydratase reaction for beta-hydroxyacyl-ACPs with saturated chain lengths up to 16:0, being most active on intermediate chain length. The protein is 3-hydroxydecanoyl-[acyl-carrier-protein] dehydratase of Marinomonas sp. (strain MWYL1).